The chain runs to 303 residues: MKITVLGCGALGQLWLSALCKHGHDVQGWLRVPQPYCSVNLIDTDGSFFNESLTANDPDFLAKSELLLVTLKAWQVSDAVRTLASTLPVTSPILLIHNGMGTIEELQSIQQPMLMGAITHAARRDGNIIIHVANGTTHIGPAREQDGDYSYLAEILQGVLPDVAWHNNIRAEMWRKLAVNCVINPLTALWNCPNGELRHHTDEINAICEEVAAVIEREGYHTSADDLCYYVEQVIDSTAENISSMLQDVRAMRHTEIDYITGYLLKRARVHGLAVPENSRLFEMVKRKESEYERSGTGMPRPW.

NADP(+) contacts are provided by residues 7-12 (GCGALG), N98, and A122. N98 lines the substrate pocket. K176 acts as the Proton donor in catalysis. N180, N184, N194, and S244 together coordinate substrate. E256 is a binding site for NADP(+).

The protein belongs to the ketopantoate reductase family. In terms of assembly, monomer.

It localises to the cytoplasm. It catalyses the reaction (R)-pantoate + NADP(+) = 2-dehydropantoate + NADPH + H(+). The protein operates within cofactor biosynthesis; (R)-pantothenate biosynthesis; (R)-pantoate from 3-methyl-2-oxobutanoate: step 2/2. Its function is as follows. Catalyzes the NADPH-dependent reduction of ketopantoate into pantoic acid. This Salmonella typhi protein is 2-dehydropantoate 2-reductase (panE).